We begin with the raw amino-acid sequence, 176 residues long: Large ribosomal subunit protein eL20 (176 aa).

Lys-11 participates in a covalent cross-link: Glycyl lysine isopeptide (Lys-Gly) (interchain with G-Cter in SUMO2). Tyr-63 bears the Phosphotyrosine mark. Ser-71 carries the phosphoserine modification. Lys-76 bears the N6-succinyllysine mark. Ser-123 is subject to Phosphoserine. Glycyl lysine isopeptide (Lys-Gly) (interchain with G-Cter in SUMO2) cross-links involve residues Lys-128 and Lys-170.

It belongs to the eukaryotic ribosomal protein eL20 family. As to quaternary structure, component of the large ribosomal subunit. Binds IPO9 with high affinity.

The protein localises to the cytoplasm. Its function is as follows. Component of the large ribosomal subunit. The ribosome is a large ribonucleoprotein complex responsible for the synthesis of proteins in the cell. This is Large ribosomal subunit protein eL20 (RPL18A) from Oryctolagus cuniculus (Rabbit).